The chain runs to 71 residues: Sperm-associated antigen 11A (71 aa).

The N-terminal stretch at 1 to 19 (MIPRLLPFFASLLFAALLF) is a signal peptide. 3 cysteine pairs are disulfide-bonded: Cys32/Cys61, Cys39/Cys54, and Cys44/Cys62.

It belongs to the beta-defensin family.

The protein resides in the secreted. Has antimicrobial activity against E.coli. Plays a role in the defense response in the male reproductive tract, contributing to sperm maturation, storage and protection. This chain is Sperm-associated antigen 11A, found in Mus musculus (Mouse).